We begin with the raw amino-acid sequence, 409 residues long: Argininosuccinate synthase (409 aa).

ATP contacts are provided by residues 8–16 (AYSGGLDTS) and Ala-34. Tyr-85 serves as a coordination point for L-citrulline. Gly-115 lines the ATP pocket. Residues Thr-117, Asn-121, and Asp-122 each coordinate L-aspartate. Position 121 (Asn-121) interacts with L-citrulline. The L-citrulline site is built by Arg-125, Ser-178, Ser-187, Glu-268, and Tyr-280.

Belongs to the argininosuccinate synthase family. Type 1 subfamily. In terms of assembly, homotetramer.

It localises to the cytoplasm. It carries out the reaction L-citrulline + L-aspartate + ATP = 2-(N(omega)-L-arginino)succinate + AMP + diphosphate + H(+). It functions in the pathway amino-acid biosynthesis; L-arginine biosynthesis; L-arginine from L-ornithine and carbamoyl phosphate: step 2/3. This chain is Argininosuccinate synthase, found in Thermotoga sp. (strain RQ2).